Reading from the N-terminus, the 387-residue chain is Carboxyaminopropylagmatine decarboxylase (387 aa).

The residue at position 52 (Lys-52) is an N6-(pyridoxal phosphate)lysine.

This sequence belongs to the Orn/Lys/Arg decarboxylase class-II family. Requires pyridoxal 5'-phosphate as cofactor.

It catalyses the reaction N(1)-[(S)-3-amino-3-carboxypropyl]agmatine + H(+) = N(1)-(3-aminopropyl)agmatine + CO2. The protein operates within amine and polyamine biosynthesis; spermidine biosynthesis. Functionally, decarboxylase involved in the biosynthesis of spermidine via the carboxyaminopropylagmatine (CAPA) pathway. Catalyzes the decarboxylation of CAPA to form aminopropylagmatine (APA). Can also decarboxylate carboxyspermidine and carboxynorspermidine, but not ornithine, arginine, lysine and meso-diaminopimelate. The sequence is that of Carboxyaminopropylagmatine decarboxylase from Synechocystis sp. (strain ATCC 27184 / PCC 6803 / Kazusa).